The chain runs to 516 residues: L-amino-acid oxidase (516 aa).

The signal sequence occupies residues 1 to 18; the sequence is MNVFFMFSLLFLAALGSC. Cysteine 28 and cysteine 189 are joined by a disulfide. FAD is bound by residues 61-62, 81-82, arginine 89, and 103-106; these read MS, EA, and GPMR. Substrate-binding residues include arginine 106 and histidine 239. Position 279 (valine 279) interacts with FAD. A disulfide bond links cysteine 349 and cysteine 430. Asparagine 379 carries N-linked (GlcNAc...) asparagine glycosylation. Tyrosine 390 contributes to the substrate binding site. FAD-binding positions include glutamate 475 and 482–487; that span reads GWIDST. 482 to 483 contacts substrate; that stretch reads GW.

It belongs to the flavin monoamine oxidase family. FIG1 subfamily. As to quaternary structure, homodimer; non-covalently linked. It depends on FAD as a cofactor. N-glycosylated. In terms of tissue distribution, expressed by the venom gland.

It localises to the secreted. The catalysed reaction is an L-alpha-amino acid + O2 + H2O = a 2-oxocarboxylate + H2O2 + NH4(+). Its function is as follows. Catalyzes an oxidative deamination of predominantly hydrophobic and aromatic L-amino acids, thus producing hydrogen peroxide that may contribute to the diverse toxic effects of this enzyme. Exhibits diverse biological activities, such as hemorrhage, hemolysis, edema, apoptosis of vascular endothelial cells or tumor cell lines, antibacterial and antiparasitic activities, as well as regulation of platelet aggregation. Effects of snake L-amino oxidases on platelets are controversial, since they either induce aggregation or inhibit agonist-induced aggregation. These different effects are probably due to different experimental conditions. This is L-amino-acid oxidase from Sistrurus catenatus edwardsii (Desert massasauga).